We begin with the raw amino-acid sequence, 150 residues long: 1,4-dihydroxy-2-naphthoyl-CoA hydrolase (150 aa).

D19 is an active-site residue.

This sequence belongs to the 4-hydroxybenzoyl-CoA thioesterase family. DHNA-CoA hydrolase subfamily.

The enzyme catalyses 1,4-dihydroxy-2-naphthoyl-CoA + H2O = 1,4-dihydroxy-2-naphthoate + CoA + H(+). Its pathway is cofactor biosynthesis; phylloquinone biosynthesis. It functions in the pathway quinol/quinone metabolism; 1,4-dihydroxy-2-naphthoate biosynthesis; 1,4-dihydroxy-2-naphthoate from chorismate: step 7/7. Catalyzes the hydrolysis of 1,4-dihydroxy-2-naphthoyl-CoA (DHNA-CoA) to 1,4-dihydroxy-2-naphthoate (DHNA), a reaction involved in phylloquinone (vitamin K1) biosynthesis. The chain is 1,4-dihydroxy-2-naphthoyl-CoA hydrolase from Prochlorococcus marinus subsp. pastoris (strain CCMP1986 / NIES-2087 / MED4).